A 235-amino-acid polypeptide reads, in one-letter code: Exosome complex component Rrp4 (235 aa).

One can recognise an S1 motif domain in the interval 63–137 (GDLVIGYVTD…DEYPIILTLK (75 aa)). The KH domain maps to 147 to 203 (GTVVEITPVKVPRVIGKRGSMLNTLMELGCDIVVGQNGRIWVKCKDPRDEVFLASLI).

The protein belongs to the RRP4 family. As to quaternary structure, component of the archaeal exosome complex. Forms a trimer of Rrp4 and/or Csl4 subunits. The trimer associates with a hexameric ring-like arrangement composed of 3 Rrp41-Rrp42 heterodimers.

The protein localises to the cytoplasm. Its function is as follows. Non-catalytic component of the exosome, which is a complex involved in RNA degradation. Increases the RNA binding and the efficiency of RNA degradation. Confers strong poly(A) specificity to the exosome. The polypeptide is Exosome complex component Rrp4 (Pyrobaculum aerophilum (strain ATCC 51768 / DSM 7523 / JCM 9630 / CIP 104966 / NBRC 100827 / IM2)).